The sequence spans 524 residues: Cytokinin dehydrogenase 7 (524 aa).

An N-terminal signal peptide occupies residues 1–22 (MAARCSIAFMIMASCLSVVVSG). Residue Asn-42 is glycosylated (N-linked (GlcNAc...) asparagine). Residues 55-233 (VAAAPEAVLH…TRARIGLMPA (179 aa)) form the FAD-binding PCMH-type domain. FAD-binding residues include Gly-91 and Gly-93. Residue His-94 is modified to Pros-8alpha-FAD histidine. 2 residues coordinate FAD: Ser-95 and Gln-99. N-linked (GlcNAc...) asparagine glycosylation occurs at Asn-121. FAD-binding residues include Asp-157, Thr-162, Ser-168, Ile-172, and Ile-223. Asn-277 and Asn-320 each carry an N-linked (GlcNAc...) asparagine glycan. Residues Tyr-472, Ser-507, and Gln-510 each coordinate FAD.

Belongs to the oxygen-dependent FAD-linked oxidoreductase family. Monomer. Requires FAD as cofactor.

Its subcellular location is the secreted. The protein localises to the extracellular space. It carries out the reaction N(6)-dimethylallyladenine + A + H2O = 3-methyl-2-butenal + adenine + AH2. Catalyzes the oxidation of cytokinins, a family of N(6)-substituted adenine derivatives that are plant hormones, where the substituent is an isopentenyl group. The protein is Cytokinin dehydrogenase 7 (CKX7) of Oryza sativa subsp. japonica (Rice).